A 453-amino-acid chain; its full sequence is Serine/threonine-protein phosphatase 2A regulatory subunit B'' subunit gamma (453 aa).

EF-hand domains are found at residues 273–308 and 341–376; these read PSAL…TMTN and KEPA…IQEL. Residues Asp-286, Asp-288, Asn-290, Met-292, and Glu-297 each coordinate Ca(2+).

As to quaternary structure, interacts with MCM3AP/GANP, PPP5C, and the phosphatase 2A core enzyme composed of the PPP2CA catalytic subunit and the constant regulatory subunit PPP2R1A. Finds in a complex with ABCB1, TFPI2 and PPP2R3C; leading to the dephosphorylation of ABCB1.

It is found in the nucleus. It localises to the cytoplasm. May regulate MCM3AP phosphorylation through phosphatase recruitment. May act as a negative regulator of ABCB1 expression and function through the dephosphorylation of ABCB1 by TFPI2/PPP2R3C complex. May play a role in the activation-induced cell death of B-cells. In Bos taurus (Bovine), this protein is Serine/threonine-protein phosphatase 2A regulatory subunit B'' subunit gamma (PPP2R3C).